The chain runs to 394 residues: tRNA-specific adenosine deaminase 1 (394 aa).

An A to I editase domain is found at 54–388; it reads SLGCGTKCIG…TKKPHELLDF (335 aa). Residue H78 coordinates Zn(2+). Residue E80 is the Proton donor of the active site. 1D-myo-inositol hexakisphosphate contacts are provided by R84 and R85. 2 residues coordinate Zn(2+): C127 and C191. The 1D-myo-inositol hexakisphosphate site is built by K194, R197, K320, K357, and K381.

The protein belongs to the ADAT1 family. 1D-myo-inositol hexakisphosphate serves as cofactor. As to expression, widely expressed in early embryos, and later concentrates in the central nervous system.

It carries out the reaction adenosine(37) in tRNA(Ala) + H2O + H(+) = inosine(37) in tRNA(Ala) + NH4(+). Its function is as follows. Specifically deaminates adenosine-37 to inosine in tRNA-Ala. This is tRNA-specific adenosine deaminase 1 from Drosophila melanogaster (Fruit fly).